Reading from the N-terminus, the 436-residue chain is Anaerobic glycerol-3-phosphate dehydrogenase subunit B (436 aa).

It belongs to the anaerobic G-3-P dehydrogenase subunit B family. Composed of a catalytic GlpA/B dimer and of membrane bound GlpC. The cofactor is FMN.

It carries out the reaction a quinone + sn-glycerol 3-phosphate = dihydroxyacetone phosphate + a quinol. The protein operates within polyol metabolism; glycerol degradation via glycerol kinase pathway; glycerone phosphate from sn-glycerol 3-phosphate (anaerobic route): step 1/1. Conversion of glycerol 3-phosphate to dihydroxyacetone. Uses fumarate or nitrate as electron acceptor. In Vibrio cholerae serotype O1 (strain ATCC 39315 / El Tor Inaba N16961), this protein is Anaerobic glycerol-3-phosphate dehydrogenase subunit B.